A 702-amino-acid chain; its full sequence is MAKQVFKKIINNQELIVEHGQLAKQASGSVLVRYGDTVVLVTATVNNKLSEVDFFPLTVVFQEKLYSVGKIPGGFLKREGKPSEYGTLSARVIDRALRPLFSENFRNEVQIVINVLAVDNDNDVRMVSLFAASLALSISKIPFAGPVAGALVTVDQKNNIIINPTLEQINDGQMELIVAGTDEAINMVEAGAKEVSENLMLQAILAGHDVIQQLIAFQHEIIAKVGVPKMEVELFQVRPEIITYVNNNYAKDLITAARIKEKTKRYETIEHLIEQAIKNYPMPVSLSEKEQKQLTVELKTALHNIIRQEVRRQILIDKTRLDGRKLDQIRPLSSEIDILPVVHGSALFTRGETQVLSVVTLGALGENQIIDGITDEESKRFMHHYNFPAFSVGETGRMGPPSRREIGHGALGEKVLLQIIPSEKVFPYTIRIVSEVLESNGSTSQASICAATLALMAAGVPITAPVVGIAMGLIKEKNNYTILTDIQGMEDHLGDMDFKVAGTATGICALQMDIKIVGINKAILQEALKAAKKARLTILDNVLATISAPRTHLAPTAPKMKTFMIPVDKIREVIGPGGKMITAIIEKSDDVKIDIEDDGQVTIYHKETTAIEKAYQLIKAIAMPVVVGEKIIGPVVKIEKFGVFVHLKENLDGLIHISKLAKQHVEKAEDIVQLNDIVKVKVIEIDGKGKIKLQLIEILPKK.

Residues D491 and D497 each contribute to the Mg(2+) site. Residues 558-618 (PKMKTFMIPV…TAIEKAYQLI (61 aa)) enclose the KH domain. The region spanning 628-696 (GEKIIGPVVK…GKGKIKLQLI (69 aa)) is the S1 motif domain.

It belongs to the polyribonucleotide nucleotidyltransferase family. Requires Mg(2+) as cofactor.

The protein resides in the cytoplasm. It catalyses the reaction RNA(n+1) + phosphate = RNA(n) + a ribonucleoside 5'-diphosphate. Involved in mRNA degradation. Catalyzes the phosphorolysis of single-stranded polyribonucleotides processively in the 3'- to 5'-direction. This chain is Polyribonucleotide nucleotidyltransferase, found in Spiroplasma citri.